An 846-amino-acid chain; its full sequence is Structure-specific endonuclease subunit SLX4 (846 aa).

Disordered stretches follow at residues 1 to 20, 84 to 111, 123 to 164, 283 to 322, 480 to 513, 624 to 690, and 723 to 751; these read MTDHGPDALDAFSPPRVGSA, KAGAENLPVHRTKRRKLGNQRDNTAESM, QPAE…VKKA, RTSKSLDSESLDTGTSSTSEGNGKRKQTKKAKRSAKSKIT, DPTPKITPKPGDERQSNLSNKNTERNIPEESSLL, PPNA…MGSQ, and TLASRSASSHITPQISSAPSQTVPIQTRA. Positions 141-153 are enriched in basic and acidic residues; the sequence is KPSEKGQKSEKTA. Residues 293 to 303 show a composition bias toward polar residues; it reads LDTGTSSTSEG. Basic residues predominate over residues 306-318; sequence KRKQTKKAKRSAK. Polar residues-rich tracts occupy residues 657–680 and 725–751; these read KEITNPARSSWSTAKNLKSSSKPT and ASRSASSHITPQISSAPSQTVPIQTRA.

This sequence belongs to the SLX4 family. Forms a heterodimer with SLX1. Phosphorylated in response to DNA damage.

The protein resides in the nucleus. Its function is as follows. Regulatory subunit of the SLX1-SLX4 structure-specific endonuclease that resolves DNA secondary structures generated during DNA repair and recombination. Has endonuclease activity towards branched DNA substrates, introducing single-strand cuts in duplex DNA close to junctions with ss-DNA. This Arthroderma otae (strain ATCC MYA-4605 / CBS 113480) (Microsporum canis) protein is Structure-specific endonuclease subunit SLX4.